The following is a 190-amino-acid chain: Dense granule protein 1 (190 aa).

Positions 1-24 (MVRVSAIVGAAASVFVCLSAGAYA) are cleaved as a signal peptide. Residue N30 is glycosylated (N-linked (GlcNAc...) asparagine).

Its subcellular location is the secreted. The chain is Dense granule protein 1 (GRA1) from Toxoplasma gondii.